We begin with the raw amino-acid sequence, 435 residues long: Proline and serine-rich protein 2 (435 aa).

The segment covering 1-10 (MPVTHRKSDA) has biased composition (basic and acidic residues). Residues 1 to 22 (MPVTHRKSDASDMNSDTSPSCR) are disordered. Ser8 carries the post-translational modification Phosphoserine. The segment covering 11-20 (SDMNSDTSPS) has biased composition (polar residues). Ser43 is subject to Phosphoserine. Thr45 carries the post-translational modification Phosphothreonine. Low complexity-rich tracts occupy residues 92-102 (PSLEESTSSPS) and 113-126 (PAPGAGEAEGLPEG). Disordered stretches follow at residues 92–276 (PSLE…RAAV) and 295–420 (AFPA…SEEA). Thr146 carries the phosphothreonine modification. The segment covering 146–169 (TPPPPDPPAPETLLAPPPLPSTPD) has biased composition (pro residues). Ser166 bears the Phosphoserine mark. Thr167 carries the post-translational modification Phosphothreonine. Phosphoserine occurs at positions 179, 212, and 215. Low complexity predominate over residues 228 to 237 (PAARGPRSGD). At Arg252 the chain carries Asymmetric dimethylarginine; alternate. Omega-N-methylarginine; alternate is present on Arg252. Residues 302–311 (AGEGAPGGGS) show a composition bias toward gly residues. At Ser312 the chain carries Phosphoserine. Omega-N-methylarginine; alternate is present on Arg320. Position 320 is a dimethylated arginine; alternate (Arg320). Residue Arg378 is modified to Omega-N-methylarginine. Ser400 carries the post-translational modification Phosphoserine. Residue Arg414 is modified to Omega-N-methylarginine.

This is Proline and serine-rich protein 2 (PROSER2) from Homo sapiens (Human).